The sequence spans 260 residues: Putative hydro-lyase Bmul_5125/BMULJ_03391 (260 aa).

Belongs to the D-glutamate cyclase family.

The polypeptide is Putative hydro-lyase Bmul_5125/BMULJ_03391 (Burkholderia multivorans (strain ATCC 17616 / 249)).